We begin with the raw amino-acid sequence, 608 residues long: UvrABC system protein C (608 aa).

In terms of domain architecture, GIY-YIG spans N16 to I94. The 36-residue stretch at N204–V239 folds into the UVR domain.

The protein belongs to the UvrC family. As to quaternary structure, interacts with UvrB in an incision complex.

It is found in the cytoplasm. In terms of biological role, the UvrABC repair system catalyzes the recognition and processing of DNA lesions. UvrC both incises the 5' and 3' sides of the lesion. The N-terminal half is responsible for the 3' incision and the C-terminal half is responsible for the 5' incision. This chain is UvrABC system protein C, found in Pseudomonas aeruginosa (strain ATCC 15692 / DSM 22644 / CIP 104116 / JCM 14847 / LMG 12228 / 1C / PRS 101 / PAO1).